Reading from the N-terminus, the 859-residue chain is MTTTRSNIKKRRSLATLITKIIILVLAPIILGIFIQSYYFSKQIIWQEVDRTKQQTSALIHNIFDSHFAAIQIHHDSNSKSEVIRDFYTDRDTDVLNFFFLSIDQSDPSHTPEFRFLTDHKGIIWDDGNAHFYGVNDLILDSLANRVSFSNNWYYINVMTSIGSRHMLVRRVPILDPSTGEVLGFSFNAVVLDNNFALMEKLKSESNVDNVVLVANSVPLANSLIGDEPYNVADVLQRKSSDKRLDKLLVIETPIVVNAVTTELCLLTVQDNQSVVTLQIQHILAMLASIIGMIMIALMSREWIESKVSAQLESLMSYTRSAREEKGFERFGGSDIEEFDHIGSTLESTFEELEAQKKSFRDLFNFALSPIMVWSEESVLIQMNPAARKELVIEDDHEIMHPVFQGFKEKLTPHLKMAAQGATLTGVNVPIGNKIYRWNLSPIRVDGDISGIIVQGQDITTLIEAEKQSNIARREAEKSAQARADFLAKMSHEIRTPINGILGVAQLLKDSVDTQEQKNQIDVLCHSGEHLLAVLNDILDFSKIEQGKFNIQKHPFSFTDTMRTLENIYRPICTNKGVELVIENELDPNVEIFTDQVRLNQILFNLVSNAVKFTPIGSIRLHAELEQFYGAENSVLVVELTDTGIGIESDKLDQMFEPFVQEESTTTREYGGSGLGLTIVKNLVDMLEGDVQVRSSKGGGTTFVITLPVKDRERVLRPLEVSQRIKPEALFDESLKVLLVEDNHTNAFILQAFCKKYKMQVDWAKDGLDAMELLSDTTYDLILMDNQLPHLGGIETTHEIRQNLRLGTPIYACTADTAKETSDAFMAAGANYVMLKPIKENALHEAFVDFKQRFLVERT.

The next 2 helical transmembrane spans lie at 15 to 35 (ATLI…GIFI) and 280 to 300 (IQHI…ALMS). Positions 489–711 (KMSHEIRTPI…TFVITLPVKD (223 aa)) constitute a Histidine kinase domain. Position 492 is a phosphohistidine; by autocatalysis (H492). The 116-residue stretch at 736–851 (KVLLVEDNHT…ALHEAFVDFK (116 aa)) folds into the Response regulatory domain. D785 carries the post-translational modification 4-aspartylphosphate.

In terms of assembly, binds the complex formed by AI-2 and LuxP.

The protein resides in the cell inner membrane. The catalysed reaction is ATP + protein L-histidine = ADP + protein N-phospho-L-histidine.. Its function is as follows. At low cell density, in absence of AI-2 (autoinducer 2), LuxQ has a kinase activity and autophosphorylates on a histidine residue. The phosphoryl group is then transferred to an aspartate residue in the response regulator domain. The phosphoryl group is transferred to LuxU, and ultimately to LuxO. At high cell density, in the presence of AI-2, the kinase activity is inactivated, and the response regulator domain has a phosphatase activity. The chain is Autoinducer 2 sensor kinase/phosphatase LuxQ (luxQ) from Vibrio harveyi (Beneckea harveyi).